The primary structure comprises 101 residues: Small ribosomal subunit protein bS18c (101 aa).

The span at 1–19 (MDKSKQPFRKSKRSFRRRL) shows a compositional bias: basic residues. The disordered stretch occupies residues 1–26 (MDKSKQPFRKSKRSFRRRLPPIGSGD).

It belongs to the bacterial ribosomal protein bS18 family. In terms of assembly, part of the 30S ribosomal subunit.

The protein resides in the plastid. Its subcellular location is the chloroplast. This chain is Small ribosomal subunit protein bS18c, found in Phalaenopsis aphrodite subsp. formosana (Moth orchid).